The primary structure comprises 104 residues: Large ribosomal subunit protein uL24 (104 aa).

It belongs to the universal ribosomal protein uL24 family. Part of the 50S ribosomal subunit.

Functionally, one of two assembly initiator proteins, it binds directly to the 5'-end of the 23S rRNA, where it nucleates assembly of the 50S subunit. In terms of biological role, one of the proteins that surrounds the polypeptide exit tunnel on the outside of the subunit. This Shewanella oneidensis (strain ATCC 700550 / JCM 31522 / CIP 106686 / LMG 19005 / NCIMB 14063 / MR-1) protein is Large ribosomal subunit protein uL24.